The following is an 85-amino-acid chain: Putative sodium channel toxin Ts37 (85 aa).

The signal sequence occupies residues 1–20; that stretch reads MAGEWACLLVSLVLLWGAAG. One can recognise an LCN-type CS-alpha/beta domain in the interval 22–83; that stretch reads RDGFLLDRNF…KIWGDSVRCR (62 aa). 4 disulfides stabilise this stretch: Cys32–Cys82, Cys36–Cys59, Cys45–Cys64, and Cys49–Cys66.

The protein belongs to the long (4 C-C) scorpion toxin superfamily. Sodium channel inhibitor family. Expressed by the venom gland.

The protein localises to the secreted. Functionally, putative sodium channel toxin. The protein is Putative sodium channel toxin Ts37 of Tityus serrulatus (Brazilian scorpion).